A 309-amino-acid chain; its full sequence is Nucleoside kinase (309 aa).

3 residues coordinate substrate: Asp-16, Gly-42, and Asn-46. Residue Gln-108 coordinates ATP. Residues 110–112 (SYF) and Gln-166 contribute to the substrate site. ATP is bound by residues Asn-189 and 217 to 223 (KTYGKEG). Residue Asp-249 participates in substrate binding. Asp-249 acts as the Proton acceptor in catalysis.

Belongs to the carbohydrate kinase PfkB family. Homodimer. The cofactor is Mg(2+).

In terms of biological role, catalyzes the phosphorylation of a wide range of nucleosides to yield nucleoside monophosphates, using ATP, ITP or GTP as phosphate donor. This chain is Nucleoside kinase, found in Methanothermobacter thermautotrophicus (strain ATCC 29096 / DSM 1053 / JCM 10044 / NBRC 100330 / Delta H) (Methanobacterium thermoautotrophicum).